We begin with the raw amino-acid sequence, 482 residues long: Rhamnulokinase (482 aa).

An ATP-binding site is contributed by 13–17 (ASSGR). Substrate-binding positions include Gly83 and 232–234 (HDT). Asp233 acts as the Proton acceptor in catalysis. Thr255 is an ATP binding site. Asn292 contacts substrate. Residue Asn300 coordinates ATP. Cys349 and Cys366 are oxidised to a cystine. Position 398 (Gly398) interacts with ATP. Cys409 and Cys413 are joined by a disulfide.

Belongs to the rhamnulokinase family. Mg(2+) serves as cofactor.

It catalyses the reaction L-rhamnulose + ATP = L-rhamnulose 1-phosphate + ADP + H(+). It functions in the pathway carbohydrate degradation; L-rhamnose degradation; glycerone phosphate from L-rhamnose: step 2/3. Functionally, involved in the catabolism of L-rhamnose (6-deoxy-L-mannose). Catalyzes the transfer of the gamma-phosphate group from ATP to the 1-hydroxyl group of L-rhamnulose to yield L-rhamnulose 1-phosphate. The chain is Rhamnulokinase from Mannheimia succiniciproducens (strain KCTC 0769BP / MBEL55E).